We begin with the raw amino-acid sequence, 368 residues long: UDP-N-acetylglucosamine--N-acetylmuramyl-(pentapeptide) pyrophosphoryl-undecaprenol N-acetylglucosamine transferase (368 aa).

UDP-N-acetyl-alpha-D-glucosamine is bound by residues 10–12 (TGG), asparagine 126, serine 200, isoleucine 255, and glutamine 300.

Belongs to the glycosyltransferase 28 family. MurG subfamily.

The protein resides in the cell membrane. The enzyme catalyses Mur2Ac(oyl-L-Ala-gamma-D-Glu-L-Lys-D-Ala-D-Ala)-di-trans,octa-cis-undecaprenyl diphosphate + UDP-N-acetyl-alpha-D-glucosamine = beta-D-GlcNAc-(1-&gt;4)-Mur2Ac(oyl-L-Ala-gamma-D-Glu-L-Lys-D-Ala-D-Ala)-di-trans,octa-cis-undecaprenyl diphosphate + UDP + H(+). It participates in cell wall biogenesis; peptidoglycan biosynthesis. In terms of biological role, cell wall formation. Catalyzes the transfer of a GlcNAc subunit on undecaprenyl-pyrophosphoryl-MurNAc-pentapeptide (lipid intermediate I) to form undecaprenyl-pyrophosphoryl-MurNAc-(pentapeptide)GlcNAc (lipid intermediate II). The protein is UDP-N-acetylglucosamine--N-acetylmuramyl-(pentapeptide) pyrophosphoryl-undecaprenol N-acetylglucosamine transferase of Lactobacillus helveticus (strain DPC 4571).